Here is a 176-residue protein sequence, read N- to C-terminus: Ribosome maturation factor RimM (176 aa).

One can recognise a PRC barrel domain in the interval 100 to 172 (PDTYYDHQLV…IVEIDPPHGL (73 aa)).

Belongs to the RimM family. Binds ribosomal protein uS19.

The protein localises to the cytoplasm. Functionally, an accessory protein needed during the final step in the assembly of 30S ribosomal subunit, possibly for assembly of the head region. Essential for efficient processing of 16S rRNA. May be needed both before and after RbfA during the maturation of 16S rRNA. It has affinity for free ribosomal 30S subunits but not for 70S ribosomes. In Mycobacterium bovis (strain ATCC BAA-935 / AF2122/97), this protein is Ribosome maturation factor RimM.